A 508-amino-acid chain; its full sequence is Photosystem II CP47 reaction center protein (508 aa).

A run of 6 helical transmembrane segments spans residues 21–36, 101–115, 140–156, 203–218, 237–252, and 457–472; these read AVHL…WAGS, IVLS…IWHW, GIHL…FGAF, IAAG…FHLS, VLSS…AFVV, and CFAL…HGSR.

It belongs to the PsbB/PsbC family. PsbB subfamily. As to quaternary structure, PSII is composed of 1 copy each of membrane proteins PsbA, PsbB, PsbC, PsbD, PsbE, PsbF, PsbH, PsbI, PsbJ, PsbK, PsbL, PsbM, PsbT, PsbX, PsbY, PsbZ, Psb30/Ycf12, at least 3 peripheral proteins of the oxygen-evolving complex and a large number of cofactors. It forms dimeric complexes. The cofactor is Binds multiple chlorophylls. PSII binds additional chlorophylls, carotenoids and specific lipids..

The protein resides in the plastid. It localises to the chloroplast thylakoid membrane. Functionally, one of the components of the core complex of photosystem II (PSII). It binds chlorophyll and helps catalyze the primary light-induced photochemical processes of PSII. PSII is a light-driven water:plastoquinone oxidoreductase, using light energy to abstract electrons from H(2)O, generating O(2) and a proton gradient subsequently used for ATP formation. The protein is Photosystem II CP47 reaction center protein of Zygnema circumcarinatum (Green alga).